A 1583-amino-acid polypeptide reads, in one-letter code: Protein mesh (1583 aa).

The N-terminal stretch at 1–21 (MGVKIKLVLAVVLILSANVLG) is a signal peptide. Residues 22 to 1182 (QDEIVNDTES…EFSQRALFLT (1161 aa)) are Extracellular-facing. The 156-residue stretch at 260-415 (GIYFRLDRDL…GRHIFRIDEN (156 aa)) folds into the NIDO domain. An AMOP domain is found at 647–798 (GQRWSNSMCN…VGCETFRFER (152 aa)). In terms of domain architecture, VWFD spans 811 to 1019 (GVAGIFGDPH…HWQLTDREQR (209 aa)). Residues 1110–1170 (ISCGILETPR…PDYGYTECLR (61 aa)) form the Sushi domain. Disulfide bonds link Cys-1112-Cys-1152 and Cys-1138-Cys-1168. Residues 1183–1203 (WGVIVAVILPLGLLICLLWFW) form a helical membrane-spanning segment. Topologically, residues 1204–1472 (CWHKPRSEGK…QEYSSRTLGA (269 aa)) are cytoplasmic. The span at 1232–1250 (LRSSSMGNITDTMKSSTIP) shows a compositional bias: polar residues. Positions 1232–1448 (LRSSSMGNIT…IPEAPKSAPV (217 aa)) are disordered. Basic and acidic residues predominate over residues 1291 to 1300 (GKSDSGKSDK). Over residues 1405-1416 (PIPSQYSPTYSE) the composition is skewed to polar residues. The chain crosses the membrane as a helical span at residues 1473–1493 (TWGIISAVMLPIIIILICVAW). Topologically, residues 1494–1583 (RILQRRKAEE…RQWGGETEIN (90 aa)) are extracellular. The segment covering 1521-1539 (DSVKVTSDDESIPYKKDVT) has biased composition (basic and acidic residues). A disordered region spans residues 1521–1583 (DSVKVTSDDE…RQWGGETEIN (63 aa)).

In terms of tissue distribution, in fifth instar larvae, expressed in midgut epithelial cells (at protein level).

The protein resides in the membrane. Its subcellular location is the cell junction. It is found in the septate junction. It localises to the lateral cell membrane. In terms of biological role, may be required for the proper organization of smooth septate junctions and for the barrier function of the midgut epithelium. The protein is Protein mesh of Bombyx mori (Silk moth).